The following is a 214-amino-acid chain: Mexicain (214 aa).

3 cysteine pairs are disulfide-bonded: Cys22/Cys63, Cys56/Cys95, and Cys153/Cys200. Cys25 is a catalytic residue. Cys25 contacts E64. Catalysis depends on residues His159 and Asn175.

Belongs to the peptidase C1 family. In terms of tissue distribution, expressed in latex.

Its subcellular location is the secreted. Functionally, cysteine protease. This is Mexicain from Jacaratia mexicana (Wild papaya).